The following is a 475-amino-acid chain: ADP-ribosyltransferase toxin AexT (475 aa).

The Bacterial Rho-GAP domain maps to 93-226 (VSPEDLQRLM…LQRAVKAEVA (134 aa)). One can recognise a TR mART core domain in the interval 260-436 (EGLQEQFGLE…RVLEEASLGE (177 aa)). Residues arginine 340, serine 364, and glutamate 403 contribute to the active site.

The protein localises to the secreted. Directly involved in the toxicity for RTG-2 (rainbow trout gonad) fish cells. This is ADP-ribosyltransferase toxin AexT (aexT) from Aeromonas salmonicida.